The chain runs to 160 residues: Transcriptional repressor NrdR (160 aa).

Residues 3–34 fold into a zinc finger; it reads CPFCGAEDTSVVDSRVSEEGSRIRRRRQCTAC. One can recognise an ATP-cone domain in the interval 49–139; sequence PQIIKQGGNR…VYRSFEDVGD (91 aa).

It belongs to the NrdR family. The cofactor is Zn(2+).

In terms of biological role, negatively regulates transcription of bacterial ribonucleotide reductase nrd genes and operons by binding to NrdR-boxes. The chain is Transcriptional repressor NrdR from Nitrosomonas eutropha (strain DSM 101675 / C91 / Nm57).